The following is an 826-amino-acid chain: Zinc phosphodiesterase ELAC protein 2 (826 aa).

A mitochondrion-targeting transit peptide spans Met1–Met16. A compositionally biased stretch (polar residues) spans Thr15–Gln24. 2 disordered regions span residues Thr15–Cys51 and Gln189–Arg231. The segment covering Ala27 to Arg38 has biased composition (basic and acidic residues). A phosphoserine mark is found at Ser199, Ser208, Ser212, Ser229, Ser618, and Ser736. Positions Ser208 to Leu224 are enriched in basic and acidic residues. The disordered stretch occupies residues Glu798–Gln826. Over residues Pro808–Ala820 the composition is skewed to basic and acidic residues.

The protein belongs to the RNase Z family. As to quaternary structure, homodimer. Interacts with PTCD1. The cofactor is Zn(2+).

The protein resides in the mitochondrion. It is found in the mitochondrion matrix. It localises to the mitochondrion nucleoid. The protein localises to the nucleus. It carries out the reaction Endonucleolytic cleavage of RNA, removing extra 3' nucleotides from tRNA precursor, generating 3' termini of tRNAs. A 3'-hydroxy group is left at the tRNA terminus and a 5'-phosphoryl group is left at the trailer molecule.. In terms of biological role, zinc phosphodiesterase, which displays mitochondrial tRNA 3'-processing endonuclease activity. Involved in tRNA maturation, by removing a 3'-trailer from precursor tRNA. Associates with mitochondrial DNA complexes at the nucleoids to initiate RNA processing and ribosome assembly. This Gorilla gorilla gorilla (Western lowland gorilla) protein is Zinc phosphodiesterase ELAC protein 2 (ELAC2).